Consider the following 279-residue polypeptide: HTH-type transcriptional regulator BhcR (279 aa).

Over residues 1 to 13 (MSVQIRKRGRPRG) the composition is skewed to basic residues. Residues 1 to 21 (MSVQIRKRGRPRGRAGGLGAE) form a disordered region. The HTH iclR-type domain maps to 26-87 (IRALDRALDI…SQTQAWHVGP (62 aa)). The H-T-H motif DNA-binding region spans 47-66 (LTEIAQRLDMAPSTVHRVLV). Residues 102–271 (LVERARPLLR…ARELSFGMAP (170 aa)) enclose the IclR-ED domain.

Transcriptional regulator of the bhc gene cluster involved in glycolate and glyoxylate assimilation via the beta-hydroxyaspartate cycle (BHAC). Glyoxylate negatively affects the interaction of BhcR with the promoter region of the bhc gene cluster. The protein is HTH-type transcriptional regulator BhcR of Paracoccus denitrificans (strain Pd 1222).